Here is a 78-residue protein sequence, read N- to C-terminus: Large ribosomal subunit protein uL29 (78 aa).

It belongs to the universal ribosomal protein uL29 family.

In Crocosphaera subtropica (strain ATCC 51142 / BH68) (Cyanothece sp. (strain ATCC 51142)), this protein is Large ribosomal subunit protein uL29.